A 121-amino-acid chain; its full sequence is Large ribosomal subunit protein bL12 (121 aa).

This sequence belongs to the bacterial ribosomal protein bL12 family. Homodimer. Part of the ribosomal stalk of the 50S ribosomal subunit. Forms a multimeric L10(L12)X complex, where L10 forms an elongated spine to which 2 to 4 L12 dimers bind in a sequential fashion. Binds GTP-bound translation factors.

Its function is as follows. Forms part of the ribosomal stalk which helps the ribosome interact with GTP-bound translation factors. Is thus essential for accurate translation. This chain is Large ribosomal subunit protein bL12, found in Xanthomonas euvesicatoria pv. vesicatoria (strain 85-10) (Xanthomonas campestris pv. vesicatoria).